Reading from the N-terminus, the 194-residue chain is Myelin-associated neurite-outgrowth inhibitor (194 aa).

N-acetylmethionine is present on M1. The Cytoplasmic portion of the chain corresponds to 1–18; it reads MNPVYSPGSSGVPYANAK. S6 carries the phosphoserine modification. A helical membrane pass occupies residues 19–41; it reads GIGYPAGFPVGYAAAPAYSPNMY. At 42-141 the chain is on the extracellular side; the sequence is PGANPTFQTG…PAPIPPPRGS (100 aa). N-linked (GlcNAc...) asparagine glycosylation occurs at N45. A helical membrane pass occupies residues 142–163; it reads GVTMGMVAGTTMAMSAGTLLTA. Topologically, residues 164–194 are cytoplasmic; the sequence is HSPTPVAPHPVTVPTYRAPGTPTYSYVPPQW.

This sequence belongs to the FAM168 family. In terms of assembly, may form homodimers. May interact with DAZAP2, FAM168A, PRDX6, RBM6, TMTC1 and YPEL2. Interacts with CDC27. In terms of processing, N-glycosylated. As to expression, predominantly expressed in the brain, including olfactory bulb, cortex and cerebellum (at protein level).

The protein resides in the cytoplasm. Its subcellular location is the perinuclear region. It is found in the cell membrane. The protein localises to the cell projection. It localises to the axon. Inhibitor of neuronal axonal outgrowth. Acts as a negative regulator of CDC42 and STAT3 and a positive regulator of STMN2. Positive regulator of CDC27. The protein is Myelin-associated neurite-outgrowth inhibitor (Fam168b) of Mus musculus (Mouse).